The primary structure comprises 264 residues: Complement C1q tumor necrosis factor-related protein 6 (264 aa).

Residues methionine 1 to glycine 24 form the signal peptide. N-linked (GlcNAc...) asparagine glycosylation occurs at asparagine 77. Residues leucine 81 to cysteine 125 form a disordered region. Positions glycine 83–serine 124 constitute a Collagen-like domain. Residues proline 90–asparagine 100 show a composition bias toward low complexity. Residues cysteine 125–asparagine 264 enclose the C1q domain.

It is found in the secreted. This Mus musculus (Mouse) protein is Complement C1q tumor necrosis factor-related protein 6 (C1qtnf6).